We begin with the raw amino-acid sequence, 490 residues long: Hippocampus abundant transcript 1 protein (490 aa).

Position 1 is an N-acetylmethionine (M1). The Extracellular portion of the chain corresponds to 1–40 (MTQGKKKKRAANRSIMLAKKIIIKDGGTPQGIGSPSVYHA). Residue N12 is glycosylated (N-linked (GlcNAc...) asparagine). A helical membrane pass occupies residues 41-61 (VIVIFLEFFAWGLLTAPTLVV). At 62–74 (LHETFPKHTFLMN) the chain is on the cytoplasmic side. Residues 75–95 (GLIQGVKGLLSFLSAPLIGAL) form a helical membrane-spanning segment. Residues 96-103 (SDVWGRKS) lie on the Extracellular side of the membrane. Residues 104 to 124 (FLLLTVFFTCAPIPLMKISPW) traverse the membrane as a helical segment. Over 125–126 (WY) the chain is Cytoplasmic. A helical transmembrane segment spans residues 127–147 (FAVISVSGVFAVTFSVVFAYV). Residues 148 to 160 (ADITQEHERSMAY) lie on the Extracellular side of the membrane. A helical membrane pass occupies residues 161–181 (GLVSATFAASLVTSPAIGAYL). Residues 182–188 (GRVYGDS) are Cytoplasmic-facing. A helical membrane pass occupies residues 189-209 (LVVVLATAIALLDICFILVAV). Residues 210 to 243 (PESLPEKMRPASWGAPISWEQADPFASLKKVGQD) lie on the Extracellular side of the membrane. The chain crosses the membrane as a helical span at residues 244–264 (SIVLLICITVFLSYLPEAGQY). Residues 265-284 (SSFFLYLRQIMKFSPESVAA) are Cytoplasmic-facing. A helical membrane pass occupies residues 285–305 (FIAVLGILSIIAQTIVLSLLM). The Extracellular portion of the chain corresponds to 306-313 (RSIGNKNT). The chain crosses the membrane as a helical span at residues 314–334 (ILLGLGFQILQLAWYGFGSEP). Over 335 to 337 (WMM) the chain is Cytoplasmic. The chain crosses the membrane as a helical span at residues 338-358 (WAAGAVAAMSSITFPAVSALV). Residues 359–379 (SRTADADQQGVVQGMITGIRG) are Extracellular-facing. A helical transmembrane segment spans residues 380–400 (LCNGLGPALYGFIFYIFHVEL). Residues 401–427 (KELPITGTDLGTNTSPQHHFEQNSIIP) are Cytoplasmic-facing. A helical membrane pass occupies residues 428 to 448 (GPPFLFGACSVLLALLVALFI). Residues 449 to 490 (PEHTNLSLRSSSWRKHCGSHSHPHNTQAPGEAKEPLLQDTNV) lie on the Extracellular side of the membrane. An N-linked (GlcNAc...) asparagine glycan is attached at N453. Residues 465-490 (CGSHSHPHNTQAPGEAKEPLLQDTNV) form a disordered region.

This sequence belongs to the major facilitator superfamily.

The protein resides in the membrane. The sequence is that of Hippocampus abundant transcript 1 protein from Homo sapiens (Human).